The sequence spans 386 residues: Succinate--CoA ligase [ADP-forming] subunit beta (386 aa).

Positions 9–244 (KAVLRSYGVS…LDEEDAKEIE (236 aa)) constitute an ATP-grasp domain. ATP-binding positions include Lys-46, 53–55 (GRG), Glu-99, Cys-102, and Glu-107. 2 residues coordinate Mg(2+): Asn-199 and Asp-213. Residues Asn-264 and 321–323 (GIM) contribute to the substrate site.

It belongs to the succinate/malate CoA ligase beta subunit family. In terms of assembly, heterotetramer of two alpha and two beta subunits. It depends on Mg(2+) as a cofactor.

The enzyme catalyses succinate + ATP + CoA = succinyl-CoA + ADP + phosphate. It carries out the reaction GTP + succinate + CoA = succinyl-CoA + GDP + phosphate. The protein operates within carbohydrate metabolism; tricarboxylic acid cycle; succinate from succinyl-CoA (ligase route): step 1/1. In terms of biological role, succinyl-CoA synthetase functions in the citric acid cycle (TCA), coupling the hydrolysis of succinyl-CoA to the synthesis of either ATP or GTP and thus represents the only step of substrate-level phosphorylation in the TCA. The beta subunit provides nucleotide specificity of the enzyme and binds the substrate succinate, while the binding sites for coenzyme A and phosphate are found in the alpha subunit. The polypeptide is Succinate--CoA ligase [ADP-forming] subunit beta (Bacillus thuringiensis (strain Al Hakam)).